A 521-amino-acid polypeptide reads, in one-letter code: Bifunctional purine biosynthesis protein PurH (521 aa).

The MGS-like domain maps to 1–145 (MIKQALISVS…KNHRDVTVVV (145 aa)).

The protein belongs to the PurH family.

The enzyme catalyses (6R)-10-formyltetrahydrofolate + 5-amino-1-(5-phospho-beta-D-ribosyl)imidazole-4-carboxamide = 5-formamido-1-(5-phospho-D-ribosyl)imidazole-4-carboxamide + (6S)-5,6,7,8-tetrahydrofolate. It carries out the reaction IMP + H2O = 5-formamido-1-(5-phospho-D-ribosyl)imidazole-4-carboxamide. It participates in purine metabolism; IMP biosynthesis via de novo pathway; 5-formamido-1-(5-phospho-D-ribosyl)imidazole-4-carboxamide from 5-amino-1-(5-phospho-D-ribosyl)imidazole-4-carboxamide (10-formyl THF route): step 1/1. The protein operates within purine metabolism; IMP biosynthesis via de novo pathway; IMP from 5-formamido-1-(5-phospho-D-ribosyl)imidazole-4-carboxamide: step 1/1. This Burkholderia lata (strain ATCC 17760 / DSM 23089 / LMG 22485 / NCIMB 9086 / R18194 / 383) protein is Bifunctional purine biosynthesis protein PurH.